Reading from the N-terminus, the 242-residue chain is UDP-2,3-diacylglucosamine hydrolase (242 aa).

Mn(2+)-binding residues include D7, H9, D40, N78, and H113. 78 to 79 (NR) provides a ligand contact to substrate. Residues D121, S159, T163, K166, and H194 each contribute to the substrate site. Residues H194 and H196 each coordinate Mn(2+).

This sequence belongs to the LpxH family. The cofactor is Mn(2+).

The protein resides in the cell inner membrane. The catalysed reaction is UDP-2-N,3-O-bis[(3R)-3-hydroxytetradecanoyl]-alpha-D-glucosamine + H2O = 2-N,3-O-bis[(3R)-3-hydroxytetradecanoyl]-alpha-D-glucosaminyl 1-phosphate + UMP + 2 H(+). Its pathway is glycolipid biosynthesis; lipid IV(A) biosynthesis; lipid IV(A) from (3R)-3-hydroxytetradecanoyl-[acyl-carrier-protein] and UDP-N-acetyl-alpha-D-glucosamine: step 4/6. Its function is as follows. Hydrolyzes the pyrophosphate bond of UDP-2,3-diacylglucosamine to yield 2,3-diacylglucosamine 1-phosphate (lipid X) and UMP by catalyzing the attack of water at the alpha-P atom. Involved in the biosynthesis of lipid A, a phosphorylated glycolipid that anchors the lipopolysaccharide to the outer membrane of the cell. In Ectopseudomonas mendocina (strain ymp) (Pseudomonas mendocina), this protein is UDP-2,3-diacylglucosamine hydrolase.